Here is a 397-residue protein sequence, read N- to C-terminus: Tryptophan synthase beta chain (397 aa).

K90 is subject to N6-(pyridoxal phosphate)lysine.

It belongs to the TrpB family. In terms of assembly, tetramer of two alpha and two beta chains. Pyridoxal 5'-phosphate serves as cofactor.

The enzyme catalyses (1S,2R)-1-C-(indol-3-yl)glycerol 3-phosphate + L-serine = D-glyceraldehyde 3-phosphate + L-tryptophan + H2O. It functions in the pathway amino-acid biosynthesis; L-tryptophan biosynthesis; L-tryptophan from chorismate: step 5/5. In terms of biological role, the beta subunit is responsible for the synthesis of L-tryptophan from indole and L-serine. The sequence is that of Tryptophan synthase beta chain from Nitrosomonas europaea (strain ATCC 19718 / CIP 103999 / KCTC 2705 / NBRC 14298).